The chain runs to 176 residues: UBA-like domain-containing protein 1 (176 aa).

Composition is skewed to low complexity over residues 88 to 105 and 120 to 137; these read ESFH…TSAT and TPSW…QHLQ. Residues 88–176 are disordered; the sequence is ESFHSGGSSG…RAHPAMEAER (89 aa). Over residues 138–150 the composition is skewed to pro residues; sequence PQPPLWTPAPPSP. The segment covering 166–176 has biased composition (basic and acidic residues); sequence PRAHPAMEAER.

Belongs to the UBALD family.

This Rattus norvegicus (Rat) protein is UBA-like domain-containing protein 1 (Ubald1).